A 430-amino-acid chain; its full sequence is Serine/threonine transporter SstT (430 aa).

Helical transmembrane passes span 24–44 (IIVG…VTWI), 47–67 (FGTL…FVLV), 82–102 (FGTV…VAVL), 144–164 (AIID…GLAM), 186–206 (VIRW…FTNV), 223–243 (LLVG…IFIF), 294–314 (IPLG…IMAM), 320–340 (LGIQ…ALGA), and 361–381 (FGIS…IGVI).

It belongs to the dicarboxylate/amino acid:cation symporter (DAACS) (TC 2.A.23) family.

It is found in the cell membrane. It carries out the reaction L-serine(in) + Na(+)(in) = L-serine(out) + Na(+)(out). The catalysed reaction is L-threonine(in) + Na(+)(in) = L-threonine(out) + Na(+)(out). Its function is as follows. Involved in the import of serine and threonine into the cell, with the concomitant import of sodium (symport system). This chain is Serine/threonine transporter SstT, found in Bifidobacterium adolescentis (strain ATCC 15703 / DSM 20083 / NCTC 11814 / E194a).